Here is a 508-residue protein sequence, read N- to C-terminus: Catalase (508 aa).

Positions 1–21 (MHMSKSFLLISMGLASISVHA) are cleaved as a signal peptide. Residues His-72 and Asn-145 contribute to the active site. Heme is bound at residue Tyr-353. Positions 373–392 (PKSPVANHNQDGPSNNSTGL) are enriched in polar residues. Residues 373–396 (PKSPVANHNQDGPSNNSTGLGNVD) are disordered.

The protein belongs to the catalase family. Heme is required as a cofactor.

The protein localises to the periplasm. The catalysed reaction is 2 H2O2 = O2 + 2 H2O. Decomposes hydrogen peroxide into water and oxygen; serves to protect cells from the toxic effects of hydrogen peroxide. The sequence is that of Catalase from Vibrio vulnificus (strain YJ016).